The primary structure comprises 71 residues: Dermaseptin-PT9 (71 aa).

Residues 1 to 22 (MAFLKKSLFLVLFLGLVSLSIC) form the signal peptide. Positions 23–43 (EEEKRENEMEQEDDEQSEMKR) are excised as a propeptide. The residue at position 68 (Val-68) is a Valine amide. A propeptide spanning residues 69–71 (GEQ) is cleaved from the precursor.

It belongs to the frog skin active peptide (FSAP) family. Dermaseptin subfamily. In terms of tissue distribution, expressed by the skin glands.

The protein localises to the secreted. The protein resides in the target cell membrane. Functionally, antimicrobial peptide with activity against fungi, Gram-positive and Gram-negative bacteria. Is active against S.aureus (MIC=16 uM), MRSA (MIC=32 uM), E.faecalis (MIC=16 uM), E.coli (MIC=8 uM), P.aeruginosa (MIC=16 uM), K.pneumoniae (MIC=8 uM), and C.albicans (MIC=64 uM). Also inhibits biofilm formation. Acts by disrupting cell membranes. Also exhibits anti-proliferative effect against various human cancer cells. Shows weak hemolytic activity towards horse erythrocytes. The polypeptide is Dermaseptin-PT9 (Phyllomedusa tarsius (Brownbelly leaf frog)).